A 227-amino-acid polypeptide reads, in one-letter code: Holliday junction branch migration complex subunit RuvA (227 aa).

Residues Met1–Ser64 are domain I. The segment at Asn65–Ser143 is domain II. Residues Gln144–Ala158 are flexible linker. Residues Pro159–Glu227 form a domain III region.

This sequence belongs to the RuvA family. As to quaternary structure, homotetramer. Forms an RuvA(8)-RuvB(12)-Holliday junction (HJ) complex. HJ DNA is sandwiched between 2 RuvA tetramers; dsDNA enters through RuvA and exits via RuvB. An RuvB hexamer assembles on each DNA strand where it exits the tetramer. Each RuvB hexamer is contacted by two RuvA subunits (via domain III) on 2 adjacent RuvB subunits; this complex drives branch migration. In the full resolvosome a probable DNA-RuvA(4)-RuvB(12)-RuvC(2) complex forms which resolves the HJ.

The protein resides in the cytoplasm. In terms of biological role, the RuvA-RuvB-RuvC complex processes Holliday junction (HJ) DNA during genetic recombination and DNA repair, while the RuvA-RuvB complex plays an important role in the rescue of blocked DNA replication forks via replication fork reversal (RFR). RuvA specifically binds to HJ cruciform DNA, conferring on it an open structure. The RuvB hexamer acts as an ATP-dependent pump, pulling dsDNA into and through the RuvAB complex. HJ branch migration allows RuvC to scan DNA until it finds its consensus sequence, where it cleaves and resolves the cruciform DNA. The chain is Holliday junction branch migration complex subunit RuvA from Treponema pallidum (strain Nichols).